A 304-amino-acid polypeptide reads, in one-letter code: Oxygen-dependent coproporphyrinogen-III oxidase (304 aa).

Ser94 lines the substrate pocket. A divalent metal cation is bound by residues His98 and His108. Catalysis depends on His108, which acts as the Proton donor. Residue 110 to 112 (NVR) coordinates substrate. A divalent metal cation is bound by residues His147 and His177. Residues 242-277 (YVEFNLVYDRGTLFGLQTGGRTESILMSMPPLVRWE) form an important for dimerization region. 260–262 (GGR) is a binding site for substrate.

This sequence belongs to the aerobic coproporphyrinogen-III oxidase family. In terms of assembly, homodimer. A divalent metal cation is required as a cofactor.

It localises to the cytoplasm. The catalysed reaction is coproporphyrinogen III + O2 + 2 H(+) = protoporphyrinogen IX + 2 CO2 + 2 H2O. It participates in porphyrin-containing compound metabolism; protoporphyrin-IX biosynthesis; protoporphyrinogen-IX from coproporphyrinogen-III (O2 route): step 1/1. In terms of biological role, involved in the heme biosynthesis. Catalyzes the aerobic oxidative decarboxylation of propionate groups of rings A and B of coproporphyrinogen-III to yield the vinyl groups in protoporphyrinogen-IX. This chain is Oxygen-dependent coproporphyrinogen-III oxidase, found in Shewanella halifaxensis (strain HAW-EB4).